Here is a 103-residue protein sequence, read N- to C-terminus: Large ribosomal subunit protein bL21 (103 aa).

This sequence belongs to the bacterial ribosomal protein bL21 family. Part of the 50S ribosomal subunit. Contacts protein L20.

Functionally, this protein binds to 23S rRNA in the presence of protein L20. In Psychrobacter sp. (strain PRwf-1), this protein is Large ribosomal subunit protein bL21.